The following is a 373-amino-acid chain: Lipoyl synthase (373 aa).

The segment at 12 to 36 (HVVSNDHPSSSPLQPGVKQSGEDKI) is disordered. The [4Fe-4S] cluster site is built by Cys81, Cys86, Cys92, Cys107, Cys111, Cys114, and Ser323. Residues 93-312 (FSHGTATFMI…EEYGMALGFS (220 aa)) enclose the Radical SAM core domain. The interval 346–373 (PAVSSTEHRERHTIASKSASKTESIRHR) is disordered.

This sequence belongs to the radical SAM superfamily. Lipoyl synthase family. The cofactor is [4Fe-4S] cluster.

It localises to the cytoplasm. It catalyses the reaction [[Fe-S] cluster scaffold protein carrying a second [4Fe-4S](2+) cluster] + N(6)-octanoyl-L-lysyl-[protein] + 2 oxidized [2Fe-2S]-[ferredoxin] + 2 S-adenosyl-L-methionine + 4 H(+) = [[Fe-S] cluster scaffold protein] + N(6)-[(R)-dihydrolipoyl]-L-lysyl-[protein] + 4 Fe(3+) + 2 hydrogen sulfide + 2 5'-deoxyadenosine + 2 L-methionine + 2 reduced [2Fe-2S]-[ferredoxin]. It participates in protein modification; protein lipoylation via endogenous pathway; protein N(6)-(lipoyl)lysine from octanoyl-[acyl-carrier-protein]: step 2/2. Catalyzes the radical-mediated insertion of two sulfur atoms into the C-6 and C-8 positions of the octanoyl moiety bound to the lipoyl domains of lipoate-dependent enzymes, thereby converting the octanoylated domains into lipoylated derivatives. The polypeptide is Lipoyl synthase (Xylella fastidiosa (strain 9a5c)).